We begin with the raw amino-acid sequence, 158 residues long: Transcriptional repressor NrdR (158 aa).

Residues C3–C34 fold into a zinc finger. In terms of domain architecture, ATP-cone spans I49–T139.

The protein belongs to the NrdR family. The cofactor is Zn(2+).

Functionally, negatively regulates transcription of bacterial ribonucleotide reductase nrd genes and operons by binding to NrdR-boxes. The sequence is that of Transcriptional repressor NrdR from Caldanaerobacter subterraneus subsp. tengcongensis (strain DSM 15242 / JCM 11007 / NBRC 100824 / MB4) (Thermoanaerobacter tengcongensis).